A 341-amino-acid chain; its full sequence is NADH-ubiquinone oxidoreductase chain 2 (341 aa).

Transmembrane regions (helical) follow at residues 8–28, 61–81, 95–117, 145–165, 195–215, 238–258, 266–286, and 320–340; these read IFFI…SWLG, FLTQ…MMMF, LLIL…FPGV, LNIN…ALGG, LLWL…ILMF, FFMF…GFLP, LVEM…LITL, and ILTM…IYLI.

This sequence belongs to the complex I subunit 2 family.

It is found in the mitochondrion inner membrane. It carries out the reaction a ubiquinone + NADH + 5 H(+)(in) = a ubiquinol + NAD(+) + 4 H(+)(out). In terms of biological role, core subunit of the mitochondrial membrane respiratory chain NADH dehydrogenase (Complex I) that is believed to belong to the minimal assembly required for catalysis. Complex I functions in the transfer of electrons from NADH to the respiratory chain. The immediate electron acceptor for the enzyme is believed to be ubiquinone. This chain is NADH-ubiquinone oxidoreductase chain 2, found in Aedes aegypti (Yellowfever mosquito).